The following is a 63-amino-acid chain: ATP synthase subunit epsilon, mitochondrial (63 aa).

F-type ATP synthases have 2 components, the catalytic core F(1) and the membrane-embedded component F(0), linked together by a central stalk and a peripheral stalk. The central stalk, also called rotor shaft, is often seen as part of F(1). The peripheral stalk is seen as part of F(0). F(0) contains the membrane channel next to the rotor. F-type ATP synthases form dimers but each monomer functions independently in ATP generation. The dimer consists of 18 different polypeptides: ATP1 (subunit alpha, part of F(1), 3 molecules per monomer), ATP2 (subunit beta, part of F(1), 3 molecules per monomer), ATP3 (subunit gamma, part of the central stalk), ATP4 (subunit b, part of the peripheral stalk), ATP5/OSCP (subunit 5/OSCP, part of the peripheral stalk), ATP6 (subunit a, part of the peripheral stalk), ATP7 (subunit d, part of the peripheral stalk), ATP8 (subunit 8, part of the peripheral stalk), OLI1 (subunit c, part of the rotor, 10 molecules per monomer), ATP14 (subunit h, part of the peripheral stalk), ATP15 (subunit epsilon, part of the central stalk), ATP16 (subunit delta, part of the central stalk), ATP17 (subunit f, part of the peripheral stalk), ATP18 (subunit i/j, part of the peripheral stalk). Dimer-specific subunits are ATP19 (subunit k, at interface between monomers), ATP20 (subunit g, at interface between monomers), TIM11 (subunit e, at interface between monomers). Also contains subunit L.

It localises to the mitochondrion inner membrane. Its function is as follows. Mitochondrial membrane ATP synthase (F(1)F(0) ATP synthase or Complex V) produces ATP from ADP in the presence of a proton gradient across the membrane which is generated by electron transport complexes of the respiratory chain. F-type ATP synthases consist of two structural domains, F(1) - containing the extramembraneous catalytic core, and F(0) - containing the membrane proton channel, linked together by a central stalk and a peripheral stalk. During catalysis, ATP synthesis in the catalytic domain of F(1) is coupled via a rotary mechanism of the central stalk subunits to proton translocation. Part of the complex F(1) domain and the central stalk which is part of the complex rotary element. Rotation of the central stalk against the surrounding alpha/ATP1(3)beta/ATP2(3) subunits leads to hydrolysis of ATP in three separate catalytic sites on the beta/ATP2 subunits. The chain is ATP synthase subunit epsilon, mitochondrial from Pichia angusta (Yeast).